The following is a 192-amino-acid chain: Imidazoleglycerol-phosphate dehydratase (192 aa).

It belongs to the imidazoleglycerol-phosphate dehydratase family.

The protein resides in the cytoplasm. It catalyses the reaction D-erythro-1-(imidazol-4-yl)glycerol 3-phosphate = 3-(imidazol-4-yl)-2-oxopropyl phosphate + H2O. It participates in amino-acid biosynthesis; L-histidine biosynthesis; L-histidine from 5-phospho-alpha-D-ribose 1-diphosphate: step 6/9. The polypeptide is Imidazoleglycerol-phosphate dehydratase (Clostridioides difficile (strain 630) (Peptoclostridium difficile)).